The following is a 366-amino-acid chain: Ribosomal RNA large subunit methyltransferase M (366 aa).

S-adenosyl-L-methionine is bound by residues Ser-188, 221 to 224 (CPGG), Asp-240, Asp-260, and Asp-277. Residue Lys-306 is the Proton acceptor of the active site.

The protein belongs to the class I-like SAM-binding methyltransferase superfamily. RNA methyltransferase RlmE family. RlmM subfamily. Monomer.

It localises to the cytoplasm. It catalyses the reaction cytidine(2498) in 23S rRNA + S-adenosyl-L-methionine = 2'-O-methylcytidine(2498) in 23S rRNA + S-adenosyl-L-homocysteine + H(+). Catalyzes the 2'-O-methylation at nucleotide C2498 in 23S rRNA. The protein is Ribosomal RNA large subunit methyltransferase M of Escherichia coli O139:H28 (strain E24377A / ETEC).